The sequence spans 1053 residues: 3-hydroxy-3-methylglutaryl-coenzyme A reductase (1053 aa).

Topologically, residues 1–8 (MIYKLAAR) are cytoplasmic. A helical transmembrane segment spans residues 9-29 (YPIQVIAIVGILVSMAYFSFL). The Lumenal portion of the chain corresponds to 30–203 (EALTQEDFPV…LKIASQASKT (174 aa)). N-linked (GlcNAc...) asparagine glycosylation is present at asparagine 137. The chain crosses the membrane as a helical span at residues 204–224 (ELLIVGTAYACMLISIVSLYL). The SSD domain occupies 204–365 (ELLIVGTAYA…FSFFVAILTL (162 aa)). Topologically, residues 225 to 232 (KMRRLGSK) are cytoplasmic. The chain crosses the membrane as a helical span at residues 233–253 (FWLFFSVLLSTLFSVQFAMTL). Residues 254–258 (VRASG) lie on the Lumenal side of the membrane. Residues 259–279 (VRISLVSLIESLPFLINVVAL) form a helical membrane-spanning segment. Over 280–320 (DKAAELTRQVITRCSVSDSHSPMHEDIAKACRNAAPPILRH) the chain is Cytoplasmic. A run of 2 helical transmembrane segments spans residues 321–341 (FSFGIVVLAIFSYCNFGIKQF) and 342–362 (FLFAAVMIYDLLLLFSFFVAI). The Cytoplasmic segment spans residues 363 to 417 (LTLKLEMRRYNAKDDVRKVLIEEGLSESTARHVADGNDSSATTSAGSRYFKVRYG). The helical transmembrane segment at 418–438 (TKIILFIFIAFNLFELCSIPF) threads the bilayer. The Lumenal portion of the chain corresponds to 439–526 (KHYAATSAAA…NNWSHYISAS (88 aa)). Residue asparagine 518 is glycosylated (N-linked (GlcNAc...) asparagine). A helical transmembrane segment spans residues 527–547 (FLSKWIVCALSLSIAVNVFLL). Topologically, residues 548–1053 (NAARLNSIKE…KSVNSRVPGR (506 aa)) are cytoplasmic. The active-site Charge relay system is glutamate 712. 718 to 724 (STMRGCK) contacts CoA. NADP(+)-binding positions include 779 to 781 (SRF) and 806 to 814 (DAMGMNMIS). The active-site Charge relay system is the lysine 846. 875-877 (VLK) is a binding site for CoA. Aspartate 922 functions as the Charge relay system in the catalytic mechanism. 1017–1018 (SH) serves as a coordination point for CoA. Catalysis depends on histidine 1018, which acts as the Proton donor. 1022–1023 (NR) contacts NADP(+). Residue serine 1024 is modified to Phosphoserine. Threonine 1028 is subject to Phosphothreonine. Residues 1028–1053 (TPAMDSSAKKPATDALKSVNSRVPGR) form a disordered region.

The protein belongs to the HMG-CoA reductase family.

The protein resides in the endoplasmic reticulum membrane. The protein localises to the nucleus envelope. The catalysed reaction is (R)-mevalonate + 2 NADP(+) + CoA = (3S)-3-hydroxy-3-methylglutaryl-CoA + 2 NADPH + 2 H(+). It participates in metabolic intermediate biosynthesis; (R)-mevalonate biosynthesis; (R)-mevalonate from acetyl-CoA: step 3/3. Functionally, part of the first module of ergosterol biosynthesis pathway that includes the early steps of the pathway, conserved across all eukaryotes, and which results in the formation of mevalonate from acetyl-coenzyme A (acetyl-CoA). Hmg1 catalyzes the reduction of hydroxymethylglutaryl-CoA (HMG-CoA) to mevalonate. The first module starts with the action of the cytosolic acetyl-CoA acetyltransferase eg10 that catalyzes the formation of acetoacetyl-CoA. The hydroxymethylglutaryl-CoA synthases erg13 then condenses acetyl-CoA with acetoacetyl-CoA to form HMG-CoA. The rate-limiting step of the early module is the reduction to mevalonate by the 3-hydroxy-3-methylglutaryl-coenzyme A (HMG-CoA) reductases hcs1. The protein is 3-hydroxy-3-methylglutaryl-coenzyme A reductase of Schizosaccharomyces pombe (strain 972 / ATCC 24843) (Fission yeast).